Reading from the N-terminus, the 1054-residue chain is Carbamoyl phosphate synthase large chain (1054 aa).

The tract at residues 1–402 (MPRRDDIRSI…SLLKAMASLE (402 aa)) is carboxyphosphate synthetic domain. The ATP site is built by Arg-129, Arg-169, Gly-175, Gly-176, Arg-208, Val-210, Glu-215, Gly-241, Val-242, His-243, Gln-285, and Glu-299. An ATP-grasp 1 domain is found at 133–328 (REAMERIGLR…IAKIAARLAV (196 aa)). The Mg(2+) site is built by Gln-285, Glu-299, and Asn-301. Positions 285, 299, and 301 each coordinate Mn(2+). The oligomerization domain stretch occupies residues 403–531 (IETRDIQARL…YYYSTYEQED (129 aa)). The tract at residues 532-914 (EVERGENPSV…AFAKALAAAG (383 aa)) is carbamoyl phosphate synthetic domain. The 192-residue stretch at 658–849 (GRLLRELGIP…LARLATRVLL (192 aa)) folds into the ATP-grasp 2 domain. 9 residues coordinate ATP: Arg-694, Lys-733, Glu-740, Gly-765, Val-766, His-767, Ser-768, Gln-808, and Glu-820. Residues Gln-808, Glu-820, and Asn-822 each coordinate Mg(2+). Residues Gln-808, Glu-820, and Asn-822 each contribute to the Mn(2+) site. The 140-residue stretch at 915–1054 (QRLPESGRVY…SLQDLYAART (140 aa)) folds into the MGS-like domain. Residues 915–1054 (QRLPESGRVY…SLQDLYAART (140 aa)) form an allosteric domain region.

Belongs to the CarB family. Composed of two chains; the small (or glutamine) chain promotes the hydrolysis of glutamine to ammonia, which is used by the large (or ammonia) chain to synthesize carbamoyl phosphate. Tetramer of heterodimers (alpha,beta)4. Mg(2+) is required as a cofactor. It depends on Mn(2+) as a cofactor.

It carries out the reaction hydrogencarbonate + L-glutamine + 2 ATP + H2O = carbamoyl phosphate + L-glutamate + 2 ADP + phosphate + 2 H(+). The catalysed reaction is hydrogencarbonate + NH4(+) + 2 ATP = carbamoyl phosphate + 2 ADP + phosphate + 2 H(+). The protein operates within amino-acid biosynthesis; L-arginine biosynthesis; carbamoyl phosphate from bicarbonate: step 1/1. It functions in the pathway pyrimidine metabolism; UMP biosynthesis via de novo pathway; (S)-dihydroorotate from bicarbonate: step 1/3. Its function is as follows. Large subunit of the glutamine-dependent carbamoyl phosphate synthetase (CPSase). CPSase catalyzes the formation of carbamoyl phosphate from the ammonia moiety of glutamine, carbonate, and phosphate donated by ATP, constituting the first step of 2 biosynthetic pathways, one leading to arginine and/or urea and the other to pyrimidine nucleotides. The large subunit (synthetase) binds the substrates ammonia (free or transferred from glutamine from the small subunit), hydrogencarbonate and ATP and carries out an ATP-coupled ligase reaction, activating hydrogencarbonate by forming carboxy phosphate which reacts with ammonia to form carbamoyl phosphate. The sequence is that of Carbamoyl phosphate synthase large chain from Rubrobacter xylanophilus (strain DSM 9941 / JCM 11954 / NBRC 16129 / PRD-1).